A 116-amino-acid chain; its full sequence is NADH-ubiquinone oxidoreductase chain 3 (116 aa).

The next 3 membrane-spanning stretches (helical) occupy residues Leu-3–Phe-23, Phe-56–Leu-76, and Pro-85–Tyr-105.

The protein belongs to the complex I subunit 3 family.

It localises to the mitochondrion membrane. It catalyses the reaction a ubiquinone + NADH + 5 H(+)(in) = a ubiquinol + NAD(+) + 4 H(+)(out). Functionally, core subunit of the mitochondrial membrane respiratory chain NADH dehydrogenase (Complex I) that is believed to belong to the minimal assembly required for catalysis. Complex I functions in the transfer of electrons from NADH to the respiratory chain. The immediate electron acceptor for the enzyme is believed to be ubiquinone. The sequence is that of NADH-ubiquinone oxidoreductase chain 3 (MT-ND3) from Paralichthys olivaceus (Bastard halibut).